Here is a 542-residue protein sequence, read N- to C-terminus: Aminotriazole resistance protein (542 aa).

The Cytoplasmic segment spans residues 1-108 (MGNQSLVVLT…SFGSEGNSKS (108 aa)). The helical transmembrane segment at 109–129 (WLMASFPLVSGSFILISGRLG) threads the bilayer. Over 130 to 136 (DIYGLKK) the chain is Extracellular. A helical membrane pass occupies residues 137–157 (MLLVGYVLVIIWSLICGITKY). At 158 to 172 (SGSDTFFIISRAFQG) the chain is on the cytoplasmic side. Residues 173–193 (LGIAFVLPNVLGIIGNIYVGG) traverse the membrane as a helical segment. Over 194 to 198 (TFRKN) the chain is Extracellular. A helical transmembrane segment spans residues 199–219 (IVISFVGAMAPIGATLGCLFA). At 220 to 231 (GLIGTEDPKQWP) the chain is on the cytoplasmic side. Residues 232–252 (WAFYAYSIAAFINFVLSIYAI) traverse the membrane as a helical segment. Residues 253 to 262 (PSTIPTNIHH) are Extracellular-facing. Residues 263–283 (FSMDWIGSVLGVIGLILLNFV) traverse the membrane as a helical segment. Residues 284–295 (WNQAPISGWNQA) are Cytoplasmic-facing. Residues 296–316 (YIIVILIISVIFLVVFIIYEI) form a helical membrane-spanning segment. The Extracellular segment spans residues 317–333 (RFAKTPLLPRAVIKDRH). A helical transmembrane segment spans residues 334–354 (MIQIMLALFFGWGSFGIFTFY). Residues 355–371 (YFQFQLNIRQYTALWAG) lie on the Cytoplasmic side of the membrane. The chain crosses the membrane as a helical span at residues 372–392 (GTYFMFLIWGIIAALLVGFTI). The Extracellular segment spans residues 393–399 (KNVSPSV). Residues 400 to 420 (FLFFSMVAFNVGSIMASVTPV) form a helical membrane-spanning segment. Residues 421–429 (HETYFRTQL) are Cytoplasmic-facing. Residues 430–450 (GTMIILSFGMDLSFPASSIIF) traverse the membrane as a helical segment. Residues 451 to 505 (SDNLPMEYQGMAGSLVNTVVNYSMSLCLGMGATVETQVNSDGKHLLKGYRGAQYL) lie on the Extracellular side of the membrane. Residue N471 is glycosylated (N-linked (GlcNAc...) asparagine). A helical transmembrane segment spans residues 506 to 526 (GIGLASLACMISGLYMVESFI). Residues 527–542 (KGRRARAAAEYDCTVA) lie on the Cytoplasmic side of the membrane.

It belongs to the major facilitator superfamily.

The protein localises to the membrane. Putative component of the machinery responsible for pumping aminotriazole (and possibly other toxic compounds) out of the cell. Probable ATP-dependent export permease. Appears to confer resistance only to aminotriazole. This is Aminotriazole resistance protein (ATR1) from Saccharomyces cerevisiae (strain ATCC 204508 / S288c) (Baker's yeast).